The sequence spans 60 residues: Large ribosomal subunit protein uL30 (60 aa).

Belongs to the universal ribosomal protein uL30 family. Part of the 50S ribosomal subunit.

This is Large ribosomal subunit protein uL30 from Ligilactobacillus salivarius (strain UCC118) (Lactobacillus salivarius).